A 163-amino-acid chain; its full sequence is Lipoprotein signal peptidase (163 aa).

3 consecutive transmembrane segments (helical) span residues 11-31 (ILIA…IATT), 63-83 (KMTF…YFFI), and 88-108 (YNLF…GNFI). Active-site residues include D118 and D136. A helical transmembrane segment spans residues 131–151 (IFNIADSSLTIGVILIIIALL).

This sequence belongs to the peptidase A8 family.

It localises to the cell membrane. The enzyme catalyses Release of signal peptides from bacterial membrane prolipoproteins. Hydrolyzes -Xaa-Yaa-Zaa-|-(S,diacylglyceryl)Cys-, in which Xaa is hydrophobic (preferably Leu), and Yaa (Ala or Ser) and Zaa (Gly or Ala) have small, neutral side chains.. It participates in protein modification; lipoprotein biosynthesis (signal peptide cleavage). Functionally, this protein specifically catalyzes the removal of signal peptides from prolipoproteins. The chain is Lipoprotein signal peptidase from Staphylococcus aureus (strain MRSA252).